The chain runs to 100 residues: Urease subunit gamma (100 aa).

Belongs to the urease gamma subunit family. As to quaternary structure, heterotrimer of UreA (gamma), UreB (beta) and UreC (alpha) subunits. Three heterotrimers associate to form the active enzyme.

The protein resides in the cytoplasm. The catalysed reaction is urea + 2 H2O + H(+) = hydrogencarbonate + 2 NH4(+). It functions in the pathway nitrogen metabolism; urea degradation; CO(2) and NH(3) from urea (urease route): step 1/1. This chain is Urease subunit gamma, found in Acinetobacter baumannii (strain AB307-0294).